The following is a 370-amino-acid chain: uncharacterized protein (370 aa).

Met-1 is subject to N-acetylmethionine.

Belongs to the ornithine cyclodeaminase/mu-crystallin family.

This is an uncharacterized protein from Saccharomyces cerevisiae (strain ATCC 204508 / S288c) (Baker's yeast).